A 125-amino-acid chain; its full sequence is Small ribosomal subunit protein uS13 (125 aa).

The disordered stretch occupies residues 93–125 (RSLPVRGQRTRTNARTRKGKRKTVAGKKKAGKK).

This sequence belongs to the universal ribosomal protein uS13 family. In terms of assembly, part of the 30S ribosomal subunit. Forms a loose heterodimer with protein S19. Forms two bridges to the 50S subunit in the 70S ribosome.

Functionally, located at the top of the head of the 30S subunit, it contacts several helices of the 16S rRNA. In the 70S ribosome it contacts the 23S rRNA (bridge B1a) and protein L5 of the 50S subunit (bridge B1b), connecting the 2 subunits; these bridges are implicated in subunit movement. Contacts the tRNAs in the A and P-sites. This is Small ribosomal subunit protein uS13 from Chlorobaculum tepidum (strain ATCC 49652 / DSM 12025 / NBRC 103806 / TLS) (Chlorobium tepidum).